We begin with the raw amino-acid sequence, 498 residues long: Lysine--tRNA ligase (498 aa).

Mg(2+)-binding residues include E401 and E408.

The protein belongs to the class-II aminoacyl-tRNA synthetase family. As to quaternary structure, homodimer. Mg(2+) serves as cofactor.

It is found in the cytoplasm. The catalysed reaction is tRNA(Lys) + L-lysine + ATP = L-lysyl-tRNA(Lys) + AMP + diphosphate. The polypeptide is Lysine--tRNA ligase (Dehalococcoides mccartyi (strain CBDB1)).